Reading from the N-terminus, the 154-residue chain is Egg-lysin (154 aa).

The signal sequence occupies residues 1-18 (MKLLVLCIFAMMATLAMS).

In terms of assembly, monomer. Homodimer. Molecules associate into dimers and then rapidly dissociate again. Interacts (as a monomer) with the egg vitelline layer protein VERL (via VERL repeats); each VERL chain can bind multiple copies of lysin. Sperm (at protein level).

It localises to the cytoplasmic vesicle. The protein localises to the secretory vesicle. Its subcellular location is the acrosome lumen. Its function is as follows. Creates a 3 um hole in the egg vitelline layer through which the sperm passes. Does not have enzyme activity. Species-specific interaction between the sperm protein lysin and the egg protein VERL exposes a basic surface on lysin that may dissociate the egg vitelline layer via electrostatic repulsion. Plays a role in ensuring species-specific fertilization. The sequence is that of Egg-lysin from Haliotis rufescens (California red abalone).